Reading from the N-terminus, the 138-residue chain is DNA-directed RNA polymerase subunit omega (138 aa).

The protein belongs to the RNA polymerase subunit omega family. The RNAP catalytic core consists of 2 alpha, 1 beta, 1 beta' and 1 omega subunit. When a sigma factor is associated with the core the holoenzyme is formed, which can initiate transcription.

It catalyses the reaction RNA(n) + a ribonucleoside 5'-triphosphate = RNA(n+1) + diphosphate. Functionally, promotes RNA polymerase assembly. Latches the N- and C-terminal regions of the beta' subunit thereby facilitating its interaction with the beta and alpha subunits. The protein is DNA-directed RNA polymerase subunit omega of Thermodesulfovibrio yellowstonii (strain ATCC 51303 / DSM 11347 / YP87).